Consider the following 127-residue polypeptide: uncharacterized protein (127 aa).

Residues 84–103 (IALLSLFISLSIRITCFPFF) traverse the membrane as a helical segment.

The protein resides in the membrane. This is an uncharacterized protein from Saccharomyces cerevisiae (strain ATCC 204508 / S288c) (Baker's yeast).